Reading from the N-terminus, the 310-residue chain is ADP-L-glycero-D-manno-heptose-6-epimerase (310 aa).

Residues Phe10–Ile11, Asp31–Asn32, Lys38, Lys53, Glu75–Ser79, and Asn92 contribute to the NADP(+) site. Residue Tyr140 is the Proton acceptor of the active site. Residue Lys144 coordinates NADP(+). Asn169 lines the substrate pocket. NADP(+) is bound by residues Val170 and Lys178. Residue Lys178 is the Proton acceptor of the active site. Residues Ser180, His187, Phe201–Ser204, Arg209, and Tyr272 each bind substrate.

It belongs to the NAD(P)-dependent epimerase/dehydratase family. HldD subfamily. As to quaternary structure, homopentamer. The cofactor is NADP(+).

It catalyses the reaction ADP-D-glycero-beta-D-manno-heptose = ADP-L-glycero-beta-D-manno-heptose. The protein operates within nucleotide-sugar biosynthesis; ADP-L-glycero-beta-D-manno-heptose biosynthesis; ADP-L-glycero-beta-D-manno-heptose from D-glycero-beta-D-manno-heptose 7-phosphate: step 4/4. Its function is as follows. Catalyzes the interconversion between ADP-D-glycero-beta-D-manno-heptose and ADP-L-glycero-beta-D-manno-heptose via an epimerization at carbon 6 of the heptose. The polypeptide is ADP-L-glycero-D-manno-heptose-6-epimerase (Klebsiella pneumoniae (strain 342)).